A 112-amino-acid polypeptide reads, in one-letter code: Large ribosomal subunit protein P2 (112 aa).

Positions 81-112 are disordered; the sequence is VETAEAKKEDKKEEKKEEEEEEEDDLGFSLFG. Over residues 84 to 95 the composition is skewed to basic and acidic residues; it reads AEAKKEDKKEEK. Positions 96-106 are enriched in acidic residues; that stretch reads KEEEEEEEDDL.

The protein belongs to the eukaryotic ribosomal protein P1/P2 family. P1 and P2 exist as dimers at the large ribosomal subunit. Phosphorylated.

Plays an important role in the elongation step of protein synthesis. This chain is Large ribosomal subunit protein P2 (MAL3P3.19), found in Plasmodium falciparum (isolate 3D7).